Here is a 520-residue protein sequence, read N- to C-terminus: Succinyl-CoA:3-ketoacid coenzyme A transferase 2B, mitochondrial (520 aa).

Residues Met-1–Ser-39 constitute a mitochondrion transit peptide. A disordered region spans residues Glu-280 to Ser-299. The 5-glutamyl coenzyme A thioester intermediate role is filled by Glu-342.

This sequence belongs to the 3-oxoacid CoA-transferase family. In terms of assembly, homodimer. Testis specific. Expressed in late spermatids. Accumulates during spermiogenesis. Also detected in the midpiece of spermatozoa.

It is found in the mitochondrion. The catalysed reaction is a 3-oxo acid + succinyl-CoA = a 3-oxoacyl-CoA + succinate. The protein operates within ketone metabolism; succinyl-CoA degradation; acetoacetyl-CoA from succinyl-CoA: step 1/1. Functionally, key enzyme for ketone body catabolism. Transfers the CoA moiety from succinate to acetoacetate. Formation of the enzyme-CoA intermediate proceeds via an unstable anhydride species formed between the carboxylate groups of the enzyme and substrate. Probably play and important roles in the energy metabolism of spermatozoa. The chain is Succinyl-CoA:3-ketoacid coenzyme A transferase 2B, mitochondrial (Oxct2b) from Mus musculus (Mouse).